Reading from the N-terminus, the 1023-residue chain is Sodium/potassium-transporting ATPase subunit alpha-1 (1023 aa).

A propeptide spanning residues 1–5 (MAFKV) is cleaved from the precursor. Residues 1-11 (MAFKVGRDKYE) show a composition bias toward basic and acidic residues. Residues 1–38 (MAFKVGRDKYEPAAVSEQGDKKGKKGKKDRDMDELKKE) are disordered. The Cytoplasmic portion of the chain corresponds to 6 to 87 (GRDKYEPAAV…NALTPPPTTP (82 aa)). The residue at position 9 (Lys9) is an N6-acetyllysine. Tyr10 bears the Phosphotyrosine mark. Ser16 carries the post-translational modification Phosphoserine; by PKC. Lys21 carries the post-translational modification N6-acetyllysine. Positions 28-38 (KDRDMDELKKE) are enriched in basic and acidic residues. Ser40 and Ser47 each carry phosphoserine. A phosphoinositide-3 kinase binding region spans residues 82-84 (PPP). A helical transmembrane segment spans residues 88 to 108 (EWIKFCRQLFGGFSMLLWIGA). Over 109–131 (ILCFLAYSIQAATEEEPQNDNLY) the chain is Extracellular. Residues 132–152 (LGVVLSAVVIITGCFSYYQEA) form a helical membrane-spanning segment. The Cytoplasmic portion of the chain corresponds to 153–288 (KSSKIMESFK…GGQTPIAAEI (136 aa)). Residues 216–235 (SSLTGESEPQTRSPDFTNEN) are disordered. At Ser228 the chain carries Phosphoserine. Tyr260 bears the Phosphotyrosine mark. Residues 289 to 308 (EHFIHIITGVAVFLGVSFFI) traverse the membrane as a helical segment. The Extracellular portion of the chain corresponds to 309–320 (LSLILEYTWLEA). The chain crosses the membrane as a helical span at residues 321 to 338 (VIFLIGIIVANVPEGLLA). Over 339 to 772 (TVTVCLTLTA…EEGRLIFDNL (434 aa)) the chain is Cytoplasmic. Asp376 serves as the catalytic 4-aspartylphosphate intermediate. A phosphoserine mark is found at Ser452 and Ser484. Lys487 serves as a coordination point for ATP. A Phosphotyrosine modification is found at Tyr542. Residues 596–717 (RAAVPDAVGK…QGAIVAVTGD (122 aa)) are mediates interaction with SCN7A. The residue at position 661 (Lys661) is an N6-succinyllysine. Ser668 and Ser675 each carry phosphoserine. Mg(2+)-binding residues include Asp717 and Asp721. A helical transmembrane segment spans residues 773 to 792 (KKSIAYTLTSNIPEITPFLI). Topologically, residues 793–802 (FIIANIPLPL) are extracellular. Residues 803-823 (GTVTILCIDLGTDMVPAISLA) traverse the membrane as a helical segment. The Cytoplasmic segment spans residues 824–843 (YEQAESDIMKRQPRNPKTDK). Residues 844-866 (LVNERLISTAYGQIGMIQALGGF) form a helical membrane-spanning segment. Topologically, residues 867 to 918 (FTYFVILAENGFLPLHLLGLRVDWDDRWINDVEDSYGQQWTYEQRKIVEFTC) are extracellular. Residues 919-938 (HTAFFVSIVVVQWADLVICK) traverse the membrane as a helical segment. At 939–951 (TRRNSVFQQGMKN) the chain is on the cytoplasmic side. A Phosphoserine; by PKA modification is found at Ser943. Residues 952 to 970 (KILIFGLFEETALAAFLSY) traverse the membrane as a helical segment. The Extracellular segment spans residues 971–985 (CPGMGVALRMYPLKP). The helical transmembrane segment at 986-1006 (TWWFCAFPYSLLIFVYDEVRK) threads the bilayer. At 1007-1023 (LIIRRRPGGWVEKETYY) the chain is on the cytoplasmic side.

Belongs to the cation transport ATPase (P-type) (TC 3.A.3) family. Type IIC subfamily. As to quaternary structure, the sodium/potassium-transporting ATPase is composed of a catalytic alpha subunit, an auxiliary non-catalytic beta subunit and an additional regulatory subunit. Interacts with regulatory subunit FXYD1. Interacts with regulatory subunit FXYD3. Interacts with SIK1. Interacts with SLC35G1 and STIM1. Interacts with CLN3; this interaction regulates the sodium/potassium-transporting ATPase complex localization at the plasma membrane. Interacts with SCN7A; activates ATP1A1 P-type sodium:potassium-exchanging transporter activity which indirectly signals to nearby neurons to regulate sodium homeostasis. Phosphorylation on Tyr-10 modulates pumping activity. Phosphorylation of Ser-943 by PKA modulates the response of ATP1A1 to PKC. Dephosphorylation by protein phosphatase 2A (PP2A) following increases in intracellular sodium, leading to increase catalytic activity.

The protein resides in the cell membrane. It localises to the basolateral cell membrane. Its subcellular location is the sarcolemma. The protein localises to the cell projection. It is found in the axon. The protein resides in the melanosome. It carries out the reaction K(+)(out) + Na(+)(in) + ATP + H2O = K(+)(in) + Na(+)(out) + ADP + phosphate + H(+). Its function is as follows. This is the catalytic component of the active enzyme, which catalyzes the hydrolysis of ATP coupled with the exchange of sodium and potassium ions across the plasma membrane. This action creates the electrochemical gradient of sodium and potassium ions, providing the energy for active transport of various nutrients. Could also be part of an osmosensory signaling pathway that senses body-fluid sodium levels and controls salt intake behavior as well as voluntary water intake to regulate sodium homeostasis. This is Sodium/potassium-transporting ATPase subunit alpha-1 (ATP1A1) from Pongo abelii (Sumatran orangutan).